The primary structure comprises 226 residues: Purine nucleoside phosphorylase Cj1217c (226 aa).

Positions 58, 93, and 109 each coordinate Zn(2+).

It belongs to the purine nucleoside phosphorylase YfiH/LACC1 family. As to quaternary structure, homodimer. Requires Cu(2+) as cofactor. Zn(2+) serves as cofactor.

The catalysed reaction is adenosine + phosphate = alpha-D-ribose 1-phosphate + adenine. The enzyme catalyses S-methyl-5'-thioadenosine + phosphate = 5-(methylsulfanyl)-alpha-D-ribose 1-phosphate + adenine. It catalyses the reaction inosine + phosphate = alpha-D-ribose 1-phosphate + hypoxanthine. It carries out the reaction adenosine + H2O + H(+) = inosine + NH4(+). Its function is as follows. Purine nucleoside enzyme that catalyzes the phosphorolysis of adenosine and inosine nucleosides, yielding D-ribose 1-phosphate and the respective free bases, adenine and hypoxanthine. Also catalyzes the phosphorolysis of S-methyl-5'-thioadenosine into adenine and S-methyl-5-thio-alpha-D-ribose 1-phosphate. Also has adenosine deaminase activity. The protein is Purine nucleoside phosphorylase Cj1217c of Campylobacter jejuni subsp. jejuni serotype O:2 (strain ATCC 700819 / NCTC 11168).